The primary structure comprises 63 residues: Sec-independent protein translocase protein TatA (63 aa).

Residues 1-21 (MGSLSMWHWLIVLVIVLLLFG) form a helical membrane-spanning segment. Residues 43 to 63 (MTDEDAPETAKTVDHKADETK) form a disordered region. Over residues 53–63 (KTVDHKADETK) the composition is skewed to basic and acidic residues.

This sequence belongs to the TatA/E family. The Tat system comprises two distinct complexes: a TatABC complex, containing multiple copies of TatA, TatB and TatC subunits, and a separate TatA complex, containing only TatA subunits. Substrates initially bind to the TatABC complex, which probably triggers association of the separate TatA complex to form the active translocon.

The protein localises to the cell inner membrane. Its function is as follows. Part of the twin-arginine translocation (Tat) system that transports large folded proteins containing a characteristic twin-arginine motif in their signal peptide across membranes. TatA could form the protein-conducting channel of the Tat system. The chain is Sec-independent protein translocase protein TatA from Rhizobium etli (strain ATCC 51251 / DSM 11541 / JCM 21823 / NBRC 15573 / CFN 42).